A 530-amino-acid polypeptide reads, in one-letter code: GMP synthase [glutamine-hydrolyzing] (530 aa).

Residues 4-205 enclose the Glutamine amidotransferase type-1 domain; it reads RILILDYGSQ…VKDICGCEGD (202 aa). Catalysis depends on C84, which acts as the Nucleophile. Catalysis depends on residues H179 and E181. Residues 206–398 form the GMPS ATP-PPase domain; it reads WNMPDYISEA…LGLPPQMVYR (193 aa). 233–239 is an ATP binding site; the sequence is SGGVDSS.

As to quaternary structure, homodimer.

It catalyses the reaction XMP + L-glutamine + ATP + H2O = GMP + L-glutamate + AMP + diphosphate + 2 H(+). It functions in the pathway purine metabolism; GMP biosynthesis; GMP from XMP (L-Gln route): step 1/1. Functionally, catalyzes the synthesis of GMP from XMP. This chain is GMP synthase [glutamine-hydrolyzing], found in Bordetella bronchiseptica (strain ATCC BAA-588 / NCTC 13252 / RB50) (Alcaligenes bronchisepticus).